The primary structure comprises 207 residues: Large ribosomal subunit protein uL3 (207 aa).

The protein belongs to the universal ribosomal protein uL3 family. As to quaternary structure, part of the 50S ribosomal subunit. Forms a cluster with proteins L14 and L19.

Its function is as follows. One of the primary rRNA binding proteins, it binds directly near the 3'-end of the 23S rRNA, where it nucleates assembly of the 50S subunit. This chain is Large ribosomal subunit protein uL3, found in Desulforapulum autotrophicum (strain ATCC 43914 / DSM 3382 / VKM B-1955 / HRM2) (Desulfobacterium autotrophicum).